Reading from the N-terminus, the 157-residue chain is Catabolic 3-dehydroquinase (157 aa).

Catalysis depends on tyrosine 27, which acts as the Proton acceptor. Residues asparagine 80, histidine 86, and aspartate 93 each contribute to the substrate site. The Proton donor role is filled by histidine 106. Residues 107–108 (VS) and arginine 117 each bind substrate.

This sequence belongs to the type-II 3-dehydroquinase family. Homododecamer. Adopts a ring-like structure, composed of an arrangement of two hexameric rings stacked on top of one another.

The enzyme catalyses 3-dehydroquinate = 3-dehydroshikimate + H2O. It participates in aromatic compound metabolism; 3,4-dihydroxybenzoate biosynthesis; 3,4-dihydroxybenzoate from 3-dehydroquinate: step 1/2. In terms of biological role, is involved in the catabolism of quinate. Allows the utilization of quinate as carbon source via the beta-ketoadipate pathway. This is Catabolic 3-dehydroquinase from Pyricularia oryzae (strain 70-15 / ATCC MYA-4617 / FGSC 8958) (Rice blast fungus).